A 437-amino-acid chain; its full sequence is Nickel-cobalt-cadmium resistance protein NccC (437 aa).

The signal sequence occupies residues 1 to 48 (MGAVLKAEANIFRSHPFRPMNQATPKKLRSAPCIGVALLLMATGSIQA).

The protein belongs to the outer membrane factor (OMF) (TC 1.B.17) family.

Functionally, component of the NCC cation-efflux system that confers resistance to nickel, cobalt and cadmium. The polypeptide is Nickel-cobalt-cadmium resistance protein NccC (nccC) (Alcaligenes xylosoxydans xylosoxydans (Achromobacter xylosoxidans)).